A 274-amino-acid polypeptide reads, in one-letter code: MGLRRFKPTSPARRQMIIPDFSEITKKEPEKSLIAPLKKTGGRNSYGRVTVRFRGGGHKRRYRIIDFKRDKVGIPARVVSIEYDPNRTARIALLVYADGEKRYILAPQGLNVGDTVLNGPDAEIKPGNALPLENIPVGTIVHNVEFIPGKGGQIARSAGTSCQLMAKEGKYALLRMPSGELRKVPVKCYATIGVVGNEDHKNEVDGKAGRVRWKGRKPHVRGVAMNPVDHPHGGGEGRGKGHHPQSPWGQLAKGYKTRRGKKASDKLIVRRRNG.

The disordered stretch occupies residues 222–274; sequence GVAMNPVDHPHGGGEGRGKGHHPQSPWGQLAKGYKTRRGKKASDKLIVRRRNG. Over residues 229-239 the composition is skewed to basic and acidic residues; the sequence is DHPHGGGEGRG.

This sequence belongs to the universal ribosomal protein uL2 family. Part of the 50S ribosomal subunit. Forms a bridge to the 30S subunit in the 70S ribosome.

Functionally, one of the primary rRNA binding proteins. Required for association of the 30S and 50S subunits to form the 70S ribosome, for tRNA binding and peptide bond formation. It has been suggested to have peptidyltransferase activity; this is somewhat controversial. Makes several contacts with the 16S rRNA in the 70S ribosome. In Thermosipho africanus (strain TCF52B), this protein is Large ribosomal subunit protein uL2.